A 186-amino-acid polypeptide reads, in one-letter code: MYYNPFSPQCYYYVTVPMYNDGRSVYWTIPNEMEKVHRGADLRSSYEDRNLLLKDYGPKPFVVNINRATKQNNTFRTALWTGKHFQVTLMSLGIGEDIGLEIHPNVDQFLRIEQGRGIVKMGKSKDHLNFQRNVYDDSAIVVPAGTWHNVINTGNTPLKLYSIYAPPNHPFGTVHETKADAVAAED.

The region spanning 89–164 (LMSLGIGEDI…NTPLKLYSIY (76 aa)) is the Cupin type-2 domain. Position 117–124 (117–124 (GIVKMGKS)) interacts with ATP.

This is an uncharacterized protein from Bacillus subtilis (strain 168).